The primary structure comprises 478 residues: Allene oxide synthase 2 (478 aa).

Lysine 88, histidine 119, and lysine 123 together coordinate heme b. Asparagine 278 is a (13S)-hydroperoxy-(9Z,11E,15Z)-octadecatrienoate binding site. Lysine 427 and cysteine 429 together coordinate heme b.

This sequence belongs to the cytochrome P450 family. It depends on heme b as a cofactor. In terms of tissue distribution, weakly expressed in roots, shoots, leaves and flowers.

The catalysed reaction is (13S)-hydroperoxy-(9Z,11E,15Z)-octadecatrienoate = (9Z,13S,15Z)-12,13-epoxyoctadeca-9,11,15-trienoate + H2O. The protein operates within lipid metabolism; oxylipin biosynthesis. Its function is as follows. Involved in the biosynthesis of jasmonic acid, a growth regulator that is implicated also as a signaling molecule in plant defense. Converts 13-hydroperoxylinolenic acid to 12,13-epoxylinolenic acid. In Oryza sativa subsp. japonica (Rice), this protein is Allene oxide synthase 2 (CYP74A2).